A 455-amino-acid polypeptide reads, in one-letter code: Anthocyanidin 3-O-glucosyltransferase (455 aa).

His-18 (proton acceptor) is an active-site residue. His-18 contacts an anthocyanidin. The active-site Charge relay is the Asp-118. Thr-139 is a binding site for UDP-alpha-D-glucose. His-148 lines the an anthocyanidin pocket. The UDP-alpha-D-glucose site is built by Ala-336, Gln-338, His-353, Trp-356, Ser-358, and Glu-361. Gly-376 provides a ligand contact to an anthocyanidin. UDP-alpha-D-glucose contacts are provided by Asp-377 and Gln-378.

It belongs to the UDP-glycosyltransferase family.

The catalysed reaction is an anthocyanidin + UDP-alpha-D-glucose + H(+) = an anthocyanidin 3-O-beta-D-glucoside + UDP. The protein operates within pigment biosynthesis; anthocyanin biosynthesis. In terms of biological role, in the presence of other necessary color factors, this glycosylation reaction allows the accumulation of anthocyanin pigments. The protein is Anthocyanidin 3-O-glucosyltransferase (BZ1) of Hordeum vulgare (Barley).